Reading from the N-terminus, the 107-residue chain is uncharacterized protein (107 aa).

Belongs to the HesB/IscA family.

This is an uncharacterized protein from Azotobacter vinelandii.